The primary structure comprises 270 residues: Extracellular metalloprotease MCYG_04966 (270 aa).

The N-terminal stretch at 1-19 (MRLSLFLSGLAAAGSIVSA) is a signal peptide. N-linked (GlcNAc...) asparagine glycosylation is present at N135. H184 contacts Zn(2+). E185 is an active-site residue. A Zn(2+)-binding site is contributed by H188. N199 carries N-linked (GlcNAc...) asparagine glycosylation. Residues 208 to 227 (VADTPPQSKKTSGCPNSQDS) are disordered. A compositionally biased stretch (polar residues) spans 212 to 227 (PPQSKKTSGCPNSQDS). C221 and C247 are oxidised to a cystine.

It belongs to the peptidase M43B family.

The protein resides in the secreted. Its function is as follows. Secreted metalloproteinase that allows assimilation of proteinaceous substrates. Plays a pivotal role as a pathogenicity determinant during infections and contributes to the ability of the pathogen to persist within the mammalian host. This Arthroderma otae (strain ATCC MYA-4605 / CBS 113480) (Microsporum canis) protein is Extracellular metalloprotease MCYG_04966.